The sequence spans 74 residues: UPF0352 protein PM1884 (74 aa).

It belongs to the UPF0352 family.

This chain is UPF0352 protein PM1884, found in Pasteurella multocida (strain Pm70).